The chain runs to 197 residues: Peptidyl-tRNA hydrolase (197 aa).

Y18 contributes to the tRNA binding site. H23 (proton acceptor) is an active-site residue. TRNA contacts are provided by F69, N71, and N117.

The protein belongs to the PTH family. In terms of assembly, monomer.

It is found in the cytoplasm. It catalyses the reaction an N-acyl-L-alpha-aminoacyl-tRNA + H2O = an N-acyl-L-amino acid + a tRNA + H(+). Functionally, hydrolyzes ribosome-free peptidyl-tRNAs (with 1 or more amino acids incorporated), which drop off the ribosome during protein synthesis, or as a result of ribosome stalling. Its function is as follows. Catalyzes the release of premature peptidyl moieties from peptidyl-tRNA molecules trapped in stalled 50S ribosomal subunits, and thus maintains levels of free tRNAs and 50S ribosomes. This chain is Peptidyl-tRNA hydrolase, found in Psychromonas ingrahamii (strain DSM 17664 / CCUG 51855 / 37).